The primary structure comprises 149 residues: Arginine repressor (149 aa).

It belongs to the ArgR family.

The protein localises to the cytoplasm. It functions in the pathway amino-acid biosynthesis; L-arginine biosynthesis [regulation]. Functionally, regulates arginine biosynthesis genes. The chain is Arginine repressor from Exiguobacterium sp. (strain ATCC BAA-1283 / AT1b).